The following is a 159-amino-acid chain: MFTQIALILSLIILIFFIYKFAMFKPHVVLTPLEYFNSRKRKILEYLDNYKVKLNVSIPPLTCTDLDKNYDIEEFEVMKQTNPEKFKKYISCGYVHNVYLLTAFEEWINNSLTHSDVSFENFQYLCIRPPADISTVDFKNFKSYIKSCIQTNKTNVTYY.

Residues Gln4–Phe24 form a helical membrane-spanning segment.

The protein localises to the membrane. This is an uncharacterized protein from Acheta domesticus (House cricket).